Here is a 355-residue protein sequence, read N- to C-terminus: Glutamyl aminopeptidase (355 aa).

2 residues coordinate a divalent metal cation: His65 and Asp181. Residue Glu213 is the Proton acceptor of the active site. Positions 214, 236, and 319 each coordinate a divalent metal cation.

It belongs to the peptidase M42 family. A divalent metal cation is required as a cofactor.

It carries out the reaction Release of N-terminal glutamate (and to a lesser extent aspartate) from a peptide.. The polypeptide is Glutamyl aminopeptidase (pepA) (Lactococcus lactis subsp. cremoris (strain MG1363)).